We begin with the raw amino-acid sequence, 473 residues long: Ribosomal RNA small subunit methyltransferase F (473 aa).

S-adenosyl-L-methionine-binding positions include 124–130 (ASAPGSK), E148, D175, and D193. The active-site Nucleophile is C246.

It belongs to the class I-like SAM-binding methyltransferase superfamily. RsmB/NOP family.

Its subcellular location is the cytoplasm. It carries out the reaction cytidine(1407) in 16S rRNA + S-adenosyl-L-methionine = 5-methylcytidine(1407) in 16S rRNA + S-adenosyl-L-homocysteine + H(+). Its function is as follows. Specifically methylates the cytosine at position 1407 (m5C1407) of 16S rRNA. The chain is Ribosomal RNA small subunit methyltransferase F from Aliivibrio fischeri (strain MJ11) (Vibrio fischeri).